We begin with the raw amino-acid sequence, 274 residues long: Proteasome subunit beta (274 aa).

The propeptide at 1–52 is removed in mature form; by autocatalysis; the sequence is MADPMGGAGRLPAVFMTPGTSSFTDFLSQSAPHLLPGARGGLPGPVTEVAHG. T53 serves as the catalytic Nucleophile.

This sequence belongs to the peptidase T1B family. The 20S proteasome core is composed of 14 alpha and 14 beta subunits that assemble into four stacked heptameric rings, resulting in a barrel-shaped structure. The two inner rings, each composed of seven catalytic beta subunits, are sandwiched by two outer rings, each composed of seven alpha subunits. The catalytic chamber with the active sites is on the inside of the barrel. Has a gated structure, the ends of the cylinder being occluded by the N-termini of the alpha-subunits. Is capped by the proteasome-associated ATPase, ARC.

It localises to the cytoplasm. The enzyme catalyses Cleavage of peptide bonds with very broad specificity.. The protein operates within protein degradation; proteasomal Pup-dependent pathway. Its activity is regulated as follows. The formation of the proteasomal ATPase ARC-20S proteasome complex, likely via the docking of the C-termini of ARC into the intersubunit pockets in the alpha-rings, may trigger opening of the gate for substrate entry. Interconversion between the open-gate and close-gate conformations leads to a dynamic regulation of the 20S proteasome proteolysis activity. Functionally, component of the proteasome core, a large protease complex with broad specificity involved in protein degradation. This Frankia alni (strain DSM 45986 / CECT 9034 / ACN14a) protein is Proteasome subunit beta.